The chain runs to 770 residues: MLPSLALLLLAAWTVRALEVPTDGNAGLLAEPQIAMFCGKLNMHMNVQNGKWESDPSGTKTCIGTKEGILQYCQEVYPELQITNVVEANQPVTIQNWCKRGRKQCKTHTHIVIPYRCLVGEFVSDALLVPDKCKFLHQERMDVCETHLHWHTVAKETCSEKSTNLHDYGMLLPCGIDKFRGVEFVCCPLAEESDSIDSADAEEDDSDVWWGGADTDYADGGEDKVVEVAEEEEVADVEEEEAEDDEDVEDGDEVEEEAEEPYEEATERTTSIATTTTTTTESVEEVVREVCSEQAETGPCRAMISRWYFDVTEGKCAPFFYGGCGGNRNNFDTEEYCMAVCGSVSSQSLLKTTSEPLPQDPVKLPTTAASTPDAVDKYLETPGDENEHAHFQKAKERLEAKHRERMSQVMREWEEAERQAKNLPKADKKAVIQHFQEKVESLEQEAANERQQLVETHMARVEAMLNDRRRLALENYITALQAVPPRPHHVFNMLKKYVRAEQKDRQHTLKHFEHVRMVDPKKAAQIRSQVMTHLRVIYERMNQSLSLLYNVPAVAEEIQDEVDELLQKEQNYSDDVLANMISEPRISYGNDALMPSLTETKTTVELLPVNGEFSLDDLQPWHPFGVDSVPANTENEVEPVDARPAADRGLTTRPGSGLTNIKTEEISEVKMDAEFGHDSGFEVRHQKLVFFAEDVGSNKGAIIGLMVGGVVIATVIVITLVMLKKKQYTSIHHGVVEVDAAVTPEERHLSKMQQNGYENPTYKFFEQMQN.

The N-terminal stretch at 1-17 (MLPSLALLLLAAWTVRA) is a signal peptide. Topologically, residues 18-701 (LEVPTDGNAG…AEDVGSNKGA (684 aa)) are extracellular. Residues 28–123 (LLAEPQIAMF…PYRCLVGEFV (96 aa)) are GFLD subdomain. Residues 28–189 (LLAEPQIAMF…RGVEFVCCPL (162 aa)) form the E1 domain. 6 disulfides stabilise this stretch: Cys-38–Cys-62, Cys-73–Cys-117, Cys-98–Cys-105, Cys-133–Cys-187, Cys-144–Cys-174, and Cys-158–Cys-186. A heparin-binding site is contributed by 96–110 (NWCKRGRKQCKTHTH). The cuBD subdomain stretch occupies residues 131–189 (DKCKFLHQERMDVCETHLHWHTVAKETCSEKSTNLHDYGMLLPCGIDKFRGVEFVCCPL). Residues 135-155 (FLHQERMDVCETHLHWHTVAK) form a copper-binding region. Cu(2+) is bound by residues His-147, His-151, and Tyr-168. The interval 181–188 (GVEFVCCP) is zinc-binding. Zn(2+)-binding residues include Glu-183, Cys-186, and Cys-187. Acidic residues predominate over residues 196-207 (IDSADAEEDDSD). Residues 196 to 283 (IDSADAEEDD…TTTTTTTESV (88 aa)) are disordered. Ser-198 is modified (phosphoserine; by CK2). Ser-206 is modified (phosphoserine; by CK1). Tyr-217 and Tyr-262 each carry sulfotyrosine. A compositionally biased stretch (acidic residues) spans 228 to 264 (VAEEEEVADVEEEEAEDDEDVEDGDEVEEEAEEPYEE). Residues 268 to 281 (RTTSIATTTTTTTE) are compositionally biased toward low complexity. 3 disulfides stabilise this stretch: Cys-291-Cys-341, Cys-300-Cys-324, and Cys-316-Cys-337. The region spanning 291–341 (CSEQAETGPCRAMISRWYFDVTEGKCAPFFYGGCGGNRNNFDTEEYCMAVC) is the BPTI/Kunitz inhibitor domain. The residue at position 336 (Tyr-336) is a Sulfotyrosine. An OX-2 motif is present at residues 344–365 (VSSQSLLKTTSEPLPQDPVKLP). The 192-residue stretch at 374-565 (AVDKYLETPG…EEIQDEVDEL (192 aa)) folds into the E2 domain. The heparin-binding stretch occupies residues 391 to 423 (FQKAKERLEAKHRERMSQVMREWEEAERQAKNL). At Ser-441 the chain carries Phosphoserine. The heparin-binding stretch occupies residues 491 to 522 (FNMLKKYVRAEQKDRQHTLKHFEHVRMVDPKK). Position 497 is a phosphotyrosine (Tyr-497). Positions 523–540 (AAQIRSQVMTHLRVIYER) are collagen-binding. Residues Asn-542 and Asn-571 are each glycosylated (N-linked (GlcNAc...) asparagine). Ser-656 carries O-linked (Xyl...) (chondroitin sulfate) serine; in L-APP isoforms glycosylation. Cu(2+)-binding residues include His-677 and His-685. Zn(2+) is bound by residues His-677 and His-685. Residues 695–722 (VGSNKGAIIGLMVGGVVIATVIVITLVM) form an interaction with PSEN1 region. A helical transmembrane segment spans residues 702-722 (IIGLMVGGVVIATVIVITLVM). Topologically, residues 723 to 770 (LKKKQYTSIHHGVVEVDAAVTPEERHLSKMQQNGYENPTYKFFEQMQN) are cytoplasmic. The Basolateral sorting signal motif lies at 724-734 (KKKQYTSIHHG). Thr-729 carries the post-translational modification Phosphothreonine. Ser-730 carries the post-translational modification Phosphoserine; by APP-kinase I. The interaction with G(o)-alpha stretch occupies residues 732-751 (HHGVVEVDAAVTPEERHLSK). A Phosphothreonine; by CDK5 and MAPK10 modification is found at Thr-743. Residues 756–770 (GYENPTYKFFEQMQN) are required for the interaction with KIF5B and for anterograde transport in axons. Tyr-757 carries the phosphotyrosine; by ABL1 modification. The YENPXY motif; contains endocytosis signal signature appears at 757-762 (YENPTY). Residue Lys-763 forms a Glycyl lysine isopeptide (Lys-Gly) (interchain with G-Cter in ubiquitin) linkage.

The protein belongs to the APP family. In terms of assembly, binds, via its C-terminus, to the PID domain of several cytoplasmic proteins, including APBB family members, the APBA family, MAPK8IP1, SHC1 and NUMB and DAB1. Binding to DAB1 inhibits its serine phosphorylation. Interacts (via NPXY motif) with DAB2 (via PID domain); the interaction is impaired by tyrosine phosphorylation of the NPXY motif. Also interacts with GPCR-like protein BPP, APPBP1, IB1, KNS2 (via its TPR domains), APPBP2 (via BaSS) and DDB1. In vitro, it binds MAPT via the MT-binding domains. Associates with microtubules in the presence of ATP and in a kinesin-dependent manner. Interacts, through a C-terminal domain, with GNAO1. Amyloid-beta protein 42 binds CHRNA7 in hippocampal neurons. Amyloid-beta associates with HADH2. Interacts with CPEB1, ANKS1B and AGER. Interacts with ITM2B. Interacts with ITM2C. Interacts with IDE. Can form homodimers; dimerization is enhanced in the presence of Cu(2+) ions. Can form homodimers; this is promoted by heparin binding. Amyloid-beta protein 40 interacts with S100A9. CTF-alpha product of APP interacts with GSAP. Isoform APP695 interacts with SORL1 (via N-terminal ectodomain); this interaction retains APP in the trans-Golgi network and reduces processing into soluble APP-alpha and amyloid-beta peptides. The C99 fragment also interacts with SORL1. Isoform APP751 interacts with SORL1. Isoform APP770 interacts with SORL1. Interacts with PLD3. Interacts with VDAC1. Interacts with NSG1; could regulate APP processing. Amyloid-beta protein 42 interacts with FPR2. Interacts with SYT7. Interacts (via transmembrane region) with PSEN1; the interaction is direct. Interacts with LRRK2. Interacts (via cytoplasmic domain) with KIF5B. Interacts (via C-terminus) with APBB2/FE65L1 (via C-terminus). Interacts (via intracellular domain) with APBB3. Proteolytically processed under normal cellular conditions. Cleavage either by alpha-secretase, beta-secretase or theta-secretase leads to generation and extracellular release of soluble APP peptides, S-APP-alpha and S-APP-beta, and the retention of corresponding membrane-anchored C-terminal fragments, C80, C83 and C99. Subsequent processing of C80 and C83 by gamma-secretase yields P3 peptides. This is the major secretory pathway and is non-amyloidogenic. Alternatively, presenilin/nicastrin-mediated gamma-secretase processing of C99 releases the amyloid-beta proteins, amyloid-beta protein 40 and amyloid-beta protein 42, major components of amyloid plaques, and the cytotoxic C-terminal fragments, gamma-CTF(50), gamma-CTF(57) and gamma-CTF(59). PSEN1 cleavage is more efficient with C83 than with C99 as substrate (in vitro). Amyloid-beta protein 40 and Amyloid-beta protein 42 are cleaved by ACE. Many other minor amyloid-beta peptides, amyloid-beta 1-X peptides, are found in cerebral spinal fluid (CSF) including the amyloid-beta X-15 peptides, produced from the cleavage by alpha-secretase. Post-translationally, proteolytically cleaved by caspases during neuronal apoptosis. Cleavage at Asp-739 by either caspase-3, -8 or -9 results in the production of the neurotoxic C31 peptide and the increased production of amyloid-beta peptides. In terms of processing, N-glycosylated. O-glycosylated. O-linkage of chondroitin sulfate to the L-APP isoforms produces the APP proteoglycan core proteins, the appicans. The chondroitin sulfate chain of appicans contains 4-O-sulfated galactose in the linkage region and chondroitin sulfate E in the repeated disaccharide region. Post-translationally, phosphorylation in the C-terminal on tyrosine, threonine and serine residues is neuron-specific. Phosphorylation can affect APP processing, neuronal differentiation and interaction with other proteins. Phosphorylated on Thr-743 in neuronal cells by Cdc5 kinase and Mapk10, in dividing cells by Cdc2 kinase in a cell-cycle dependent manner with maximal levels at the G2/M phase and, in vitro, by GSK-3-beta. The Thr-743 phosphorylated form causes a conformational change which reduces binding of Fe65 family members. In dopaminergic (DA) neurons, phosphorylation on Thr-743 by LRKK2 promotes the production and the nuclear translocation of the APP intracellular domain (AICD) which induces DA neuron apoptosis. Phosphorylation on Tyr-757 is required for SHC binding. Phosphorylated in the extracellular domain by casein kinases on both soluble and membrane-bound APP. This phosphorylation is inhibited by heparin. In terms of processing, extracellular binding and reduction of copper, results in a corresponding oxidation of Cys-144 and Cys-158, and the formation of a disulfide bond. Trophic-factor deprivation triggers the cleavage of surface APP by beta-secretase to release sAPP-beta which is further cleaved to release an N-terminal fragment of APP (N-APP). Post-translationally, amyloid-beta peptides are degraded by IDE. In terms of processing, sulfated on tyrosine residues. As to expression, expressed in the brain. In the brain, non-L-APP isoforms are expressed in neurons, isoform APP695 being the predominant form. In astrocytes and microglial cells, almost 50% is L-isoform (appican).

Its subcellular location is the cell membrane. The protein localises to the membrane. The protein resides in the perikaryon. It localises to the cell projection. It is found in the growth cone. Its subcellular location is the clathrin-coated pit. The protein localises to the early endosome. The protein resides in the cytoplasmic vesicle. It localises to the endoplasmic reticulum. It is found in the golgi apparatus. Its subcellular location is the cell surface. The protein localises to the nucleus. The protein resides in the cytoplasm. It localises to the secreted. Its function is as follows. Functions as a cell surface receptor and performs physiological functions on the surface of neurons relevant to neurite growth, neuronal adhesion and axonogenesis. Interaction between APP molecules on neighboring cells promotes synaptogenesis. Involved in cell mobility and transcription regulation through protein-protein interactions. Can promote transcription activation through binding to APBB1-KAT5 and inhibit Notch signaling through interaction with Numb. Couples to apoptosis-inducing pathways such as those mediated by G(o) and JIP. Inhibits G(o)-alpha ATPase activity. Acts as a kinesin I membrane receptor, mediating the axonal transport of beta-secretase and presenilin 1. By acting as a kinesin I membrane receptor, plays a role in axonal anterograde transport of cargo towards synapses in axons. May be involved in copper homeostasis/oxidative stress through copper ion reduction. Can regulate neurite outgrowth through binding to components of the extracellular matrix such as heparin and collagen I and IV. The splice isoforms that contain the BPTI domain possess protease inhibitor activity. Induces a AGER-dependent pathway that involves activation of p38 MAPK, resulting in internalization of amyloid-beta peptide and leading to mitochondrial dysfunction in cultured mitochondrial dysfunction in cultured cortical neurons. Provides Cu(2+) ions for GPC1 which are required for release of nitric oxide (NO) and subsequent degradation of the heparan sulfate chains on GPC1. Amyloid-beta peptides are lipophilic metal chelators with metal-reducing activity. Binds transient metals such as copper, zinc and iron. Rat and mouse amyloid-beta peptides bind only weakly transient metals and have little reducing activity due to substitutions of transient metal chelating residues. Amyloid-beta protein 42 may activate mononuclear phagocytes in the brain and elicits inflammatory responses. Promotes both tau aggregation and TPK II-mediated phosphorylation. Also binds GPC1 in lipid rafts. In terms of biological role, appicans elicit adhesion of neural cells to the extracellular matrix and may regulate neurite outgrowth in the brain. Functionally, the gamma-CTF peptides as well as the caspase-cleaved peptides, including C31, are potent enhancers of neuronal apoptosis. This Rattus norvegicus (Rat) protein is Amyloid-beta precursor protein.